The following is a 1343-amino-acid chain: DNA-directed RNA polymerase subunit beta (1343 aa).

Belongs to the RNA polymerase beta chain family. The RNAP catalytic core consists of 2 alpha, 1 beta, 1 beta' and 1 omega subunit. When a sigma factor is associated with the core the holoenzyme is formed, which can initiate transcription.

The catalysed reaction is RNA(n) + a ribonucleoside 5'-triphosphate = RNA(n+1) + diphosphate. Functionally, DNA-dependent RNA polymerase catalyzes the transcription of DNA into RNA using the four ribonucleoside triphosphates as substrates. This is DNA-directed RNA polymerase subunit beta from Shewanella violacea.